A 373-amino-acid polypeptide reads, in one-letter code: Nodulation protein NolL (373 aa).

Transmembrane regions (helical) follow at residues 27 to 47 (DFAK…QYLI), 62 to 82 (SIYM…SSGA), 98 to 118 (QLLL…SAVI), 140 to 160 (WFIW…TFNR), 164 to 184 (WIIS…SITP), 212 to 232 (RYKW…FLGW), 253 to 273 (QVFL…QSMF), 286 to 306 (RFVA…QGAV), and 324 to 344 (RITF…AIRS).

It belongs to the acyltransferase 3 family.

Its subcellular location is the cell membrane. Thought to be an acetyltransferase that modifies the fucose of the nod factor. The sequence is that of Nodulation protein NolL (nolL) from Mesorhizobium japonicum (strain LMG 29417 / CECT 9101 / MAFF 303099) (Mesorhizobium loti (strain MAFF 303099)).